The chain runs to 588 residues: Sulfite reductase [NADPH] hemoprotein beta-component (588 aa).

Residues Cys-442, Cys-448, Cys-487, and Cys-491 each coordinate [4Fe-4S] cluster. Cys-491 contacts siroheme.

This sequence belongs to the nitrite and sulfite reductase 4Fe-4S domain family. Alpha(8)-beta(8). The alpha component is a flavoprotein, the beta component is a hemoprotein. Requires siroheme as cofactor. [4Fe-4S] cluster serves as cofactor.

The catalysed reaction is hydrogen sulfide + 3 NADP(+) + 3 H2O = sulfite + 3 NADPH + 4 H(+). It functions in the pathway sulfur metabolism; hydrogen sulfide biosynthesis; hydrogen sulfide from sulfite (NADPH route): step 1/1. Its function is as follows. Component of the sulfite reductase complex that catalyzes the 6-electron reduction of sulfite to sulfide. This is one of several activities required for the biosynthesis of L-cysteine from sulfate. The chain is Sulfite reductase [NADPH] hemoprotein beta-component from Actinobacillus pleuropneumoniae serotype 3 (strain JL03).